A 1328-amino-acid chain; its full sequence is DNA-directed RNA polymerase subunit beta (1328 aa).

This sequence belongs to the RNA polymerase beta chain family. In terms of assembly, the RNAP catalytic core consists of 2 alpha, 1 beta, 1 beta' and 1 omega subunit. When a sigma factor is associated with the core the holoenzyme is formed, which can initiate transcription.

The enzyme catalyses RNA(n) + a ribonucleoside 5'-triphosphate = RNA(n+1) + diphosphate. DNA-dependent RNA polymerase catalyzes the transcription of DNA into RNA using the four ribonucleoside triphosphates as substrates. The sequence is that of DNA-directed RNA polymerase subunit beta from Karelsulcia muelleri (strain GWSS) (Sulcia muelleri).